The chain runs to 501 residues: Acyl-CoA-binding domain-containing protein 5A (501 aa).

An ACB domain is found at 9–98 (YEQRFNAAVK…LKLILESMPV (90 aa)). An acyl-CoA contacts are provided by residues 20–29 (IQNLPPNGSF), 40–44 (YSYYK), Lys66, and Tyr85. Residues 173 to 405 (IDLEDREDDD…GERWGADGPM (233 aa)) are disordered. The span at 176–195 (EDREDDDDEDEEGERDEVEE) shows a compositional bias: acidic residues. Polar residues predominate over residues 219 to 235 (SNGSISQHKGLSNGTHG). Composition is skewed to basic and acidic residues over residues 236 to 254 (SKSD…HMNH), 266 to 283 (NSEK…HVAS), and 328 to 366 (RSQD…KRSD). A compositionally biased stretch (low complexity) spans 376 to 389 (SRSPASGSGSAGPQ). The stretch at 406 to 437 (TENLNEQIICALARLQDDMQSVLQRLHTLEAL) forms a coiled coil. Residues 465 to 485 (WWPFDVSLGTVAFAVVWPFVV) traverse the membrane as a helical segment.

Belongs to the ATG37 family.

It localises to the membrane. Functionally, acyl-CoA binding protein which acts as the peroxisome receptor for pexophagy but is dispensable for aggrephagy and nonselective autophagy. Binds medium- and long-chain acyl-CoA esters. The chain is Acyl-CoA-binding domain-containing protein 5A (acbd5a) from Danio rerio (Zebrafish).